The sequence spans 46 residues: L-amino-acid oxidase (46 aa).

The N-linked (GlcNAc...) asparagine glycan is linked to asparagine 31.

This sequence belongs to the flavin monoamine oxidase family. FIG1 subfamily. The cofactor is FAD.

Its subcellular location is the secreted. It localises to the lysosome. The protein localises to the cytoplasmic vesicle. It is found in the secretory vesicle. The protein resides in the acrosome. The enzyme catalyses an L-alpha-amino acid + O2 + H2O = a 2-oxocarboxylate + H2O2 + NH4(+). It carries out the reaction L-tryptophan + O2 + H2O = indole-3-pyruvate + H2O2 + NH4(+). The catalysed reaction is L-phenylalanine + O2 + H2O = 3-phenylpyruvate + H2O2 + NH4(+). It catalyses the reaction L-tyrosine + O2 + H2O = 3-(4-hydroxyphenyl)pyruvate + H2O2 + NH4(+). The enzyme catalyses L-arginine + O2 + H2O = 5-guanidino-2-oxopentanoate + H2O2 + NH4(+). It functions in the pathway amino-acid degradation; L-tryptophan degradation via pyruvate pathway. Its function is as follows. Secreted L-amino-acid oxidase that acts as a key immunoregulator. Has preference for L-aromatic amino acids: converts phenylalanine (Phe), tyrosine (Tyr) and tryptophan (Trp) to phenylpyruvic acid (PP), hydroxyphenylpyruvic acid (HPP), and indole-3-pyruvic acid (I3P), respectively. Also has weak L-arginine oxidase activity. Acts as a negative regulator of anti-tumor immunity by mediating Trp degradation via an indole pyruvate pathway that activates the transcription factor AHR. IL4I1-mediated Trp catabolism generates I3P, giving rise to indole metabolites (indole-3-acetic acid (IAA) and indole-3-aldehyde (I3A)) and kynurenic acid, which act as ligands for AHR, a ligand-activated transcription factor that plays important roles in immunity and cancer. AHR activation by indoles following IL4I1-mediated Trp degradation enhances tumor progression by promoting cancer cell motility and suppressing adaptive immunity. Also has an immunoregulatory function in some immune cells, probably by mediating Trp degradation and promoting downstream AHR activation: inhibits T-cell activation and proliferation, promotes the differentiation of naive CD4(+) T-cells into FOXP3(+) regulatory T-cells (Treg) and regulates the development and function of B-cells. Also regulates M2 macrophage polarization by inhibiting T-cell activation. Also has antibacterial properties by inhibiting growth of Gram negative and Gram positive bacteria through the production of NH4(+) and H2O2. This Mus spretus (Western Mediterranean mouse) protein is L-amino-acid oxidase.